The primary structure comprises 445 residues: Exodeoxyribonuclease 7 large subunit (445 aa).

The protein belongs to the XseA family. In terms of assembly, heterooligomer composed of large and small subunits.

The protein localises to the cytoplasm. The catalysed reaction is Exonucleolytic cleavage in either 5'- to 3'- or 3'- to 5'-direction to yield nucleoside 5'-phosphates.. Its function is as follows. Bidirectionally degrades single-stranded DNA into large acid-insoluble oligonucleotides, which are then degraded further into small acid-soluble oligonucleotides. The protein is Exodeoxyribonuclease 7 large subunit of Xanthomonas oryzae pv. oryzae (strain MAFF 311018).